A 150-amino-acid chain; its full sequence is Flagellar assembly factor FliW (150 aa).

The protein belongs to the FliW family. As to quaternary structure, interacts with translational regulator CsrA. Interacts with flagellins FlaB1, FlaB2 and FlaB3.

The protein resides in the cytoplasm. Acts as an anti-CsrA protein, binds CsrA and prevents it from repressing translation of its target genes, one of which is flagellin. Binds to flagellin and participates in the assembly of the flagellum. In terms of biological role, binds to the C-terminal region of flagellin, which is implicated in polymerization, and participates in the assembly of the flagellum. This is Flagellar assembly factor FliW from Treponema pallidum (strain Nichols).